The following is a 291-amino-acid chain: uncharacterized protein (291 aa).

This is an uncharacterized protein from Acanthamoeba polyphaga mimivirus (APMV).